We begin with the raw amino-acid sequence, 151 residues long: Snaclec 3 (151 aa).

The signal sequence occupies residues 1–23 (MGRLVFVSFSLLVVFLSLSGTAA). 3 disulfides stabilise this stretch: C25–C36, C53–C149, and C125–C141. A C-type lectin domain is found at 32–150 (YEGHCYKPFN…CGEINPFVCK (119 aa)).

It belongs to the snaclec family. In terms of assembly, heterodimer; disulfide-linked. In terms of tissue distribution, expressed by the venom gland.

It localises to the secreted. Functionally, interferes with one step of hemostasis (modulation of platelet aggregation, or coagulation cascade, for example). In Sistrurus catenatus edwardsii (Desert massasauga), this protein is Snaclec 3.